Consider the following 186-residue polypeptide: Dynactin subunit 3 (186 aa).

Residue A2 is modified to N-acetylalanine. Positions 135–157 form a coiled coil; that stretch reads QQQDQCVEITEESKALLEEYNKT.

This sequence belongs to the dynactin subunit 3 family. As to quaternary structure, subunit of dynactin, a multiprotein complex part of a tripartite complex with dynein and a adapter, such as BICDL1, BICD2 or HOOK3. The dynactin complex is built around ACTR1A/ACTB filament and consists of an actin-related filament composed of a shoulder domain, a pointed end and a barbed end. Its length is defined by its flexible shoulder domain. The soulder is composed of 2 DCTN1 subunits, 4 DCTN2 and 2 DCTN3. The 4 DCNT2 (via N-terminus) bind the ACTR1A filament and act as molecular rulers to determine the length. The pointed end is important for binding dynein-dynactin cargo adapters. Consists of 4 subunits: ACTR10, DCNT4, DCTN5 and DCTN6. The barbed end is composed of a CAPZA1:CAPZB heterodimers, which binds ACTR1A/ACTB filament and dynactin and stabilizes dynactin.

The protein resides in the cytoplasm. It is found in the cytoskeleton. It localises to the microtubule organizing center. Its subcellular location is the centrosome. The protein localises to the chromosome. The protein resides in the centromere. It is found in the kinetochore. It localises to the spindle. Its subcellular location is the cleavage furrow. The protein localises to the midbody. In terms of biological role, part of the dynactin complex that activates the molecular motor dynein for ultra-processive transport along microtubules. Together with dynein may be involved in spindle assembly and cytokinesis. The chain is Dynactin subunit 3 (DCTN3) from Bos taurus (Bovine).